We begin with the raw amino-acid sequence, 324 residues long: Acetyl-coenzyme A carboxylase carboxyl transferase subunit alpha (324 aa).

The region spanning 44 to 298 is the CoA carboxyltransferase C-terminal domain; that stretch reads RFQNQLVKLQ…KKELTEQLDS (255 aa).

The protein belongs to the AccA family. In terms of assembly, acetyl-CoA carboxylase is a heterohexamer composed of biotin carboxyl carrier protein (accB), biotin carboxylase (accC) and two subunits each of ACCase subunit alpha (accA) and ACCase subunit beta (accD).

The protein resides in the plastid. Its subcellular location is the chloroplast. The catalysed reaction is N(6)-carboxybiotinyl-L-lysyl-[protein] + acetyl-CoA = N(6)-biotinyl-L-lysyl-[protein] + malonyl-CoA. It participates in lipid metabolism; malonyl-CoA biosynthesis; malonyl-CoA from acetyl-CoA: step 1/1. In terms of biological role, component of the acetyl coenzyme A carboxylase (ACC) complex. First, biotin carboxylase catalyzes the carboxylation of biotin on its carrier protein (BCCP) and then the CO(2) group is transferred by the carboxyltransferase to acetyl-CoA to form malonyl-CoA. The protein is Acetyl-coenzyme A carboxylase carboxyl transferase subunit alpha of Pyropia yezoensis (Susabi-nori).